The chain runs to 957 residues: Bifunctional glutamine synthetase adenylyltransferase/adenylyl-removing enzyme (957 aa).

An adenylyl removase region spans residues 1-449; that stretch reads MTQHLERPEL…VFDDIIGTDE (449 aa). An adenylyl transferase region spans residues 457 to 957; sequence SEQYNEMWTM…QEYLVPSSDE (501 aa).

The protein belongs to the GlnE family. It depends on Mg(2+) as a cofactor.

It catalyses the reaction [glutamine synthetase]-O(4)-(5'-adenylyl)-L-tyrosine + phosphate = [glutamine synthetase]-L-tyrosine + ADP. The enzyme catalyses [glutamine synthetase]-L-tyrosine + ATP = [glutamine synthetase]-O(4)-(5'-adenylyl)-L-tyrosine + diphosphate. Involved in the regulation of glutamine synthetase GlnA, a key enzyme in the process to assimilate ammonia. When cellular nitrogen levels are high, the C-terminal adenylyl transferase (AT) inactivates GlnA by covalent transfer of an adenylyl group from ATP to specific tyrosine residue of GlnA, thus reducing its activity. Conversely, when nitrogen levels are low, the N-terminal adenylyl removase (AR) activates GlnA by removing the adenylyl group by phosphorolysis, increasing its activity. The regulatory region of GlnE binds the signal transduction protein PII (GlnB) which indicates the nitrogen status of the cell. This is Bifunctional glutamine synthetase adenylyltransferase/adenylyl-removing enzyme from Photobacterium profundum (strain SS9).